The primary structure comprises 278 residues: Biotin synthase (278 aa).

Residues 1 to 227 (MQIMLCAISN…QSVVMVAGGR (227 aa)) enclose the Radical SAM core domain. [4Fe-4S] cluster contacts are provided by cysteine 16, cysteine 20, and cysteine 23. [2Fe-2S] cluster is bound by residues cysteine 60, cysteine 95, and cysteine 153.

It belongs to the radical SAM superfamily. Biotin synthase family. As to quaternary structure, homodimer. [4Fe-4S] cluster serves as cofactor. The cofactor is [2Fe-2S] cluster.

The catalysed reaction is (4R,5S)-dethiobiotin + (sulfur carrier)-SH + 2 reduced [2Fe-2S]-[ferredoxin] + 2 S-adenosyl-L-methionine = (sulfur carrier)-H + biotin + 2 5'-deoxyadenosine + 2 L-methionine + 2 oxidized [2Fe-2S]-[ferredoxin]. Its pathway is cofactor biosynthesis; biotin biosynthesis; biotin from 7,8-diaminononanoate: step 2/2. Its function is as follows. Catalyzes the conversion of dethiobiotin (DTB) to biotin by the insertion of a sulfur atom into dethiobiotin via a radical-based mechanism. This Campylobacter jejuni subsp. jejuni serotype O:23/36 (strain 81-176) protein is Biotin synthase.